The following is a 62-amino-acid chain: Sec-independent protein translocase protein TatAc (62 aa).

Residues I8 to G28 form a helical membrane-spanning segment.

The protein belongs to the TatA/E family. Forms a complex with TatC.

It localises to the cell membrane. Functionally, part of the twin-arginine translocation (Tat) system that transports large folded proteins containing a characteristic twin-arginine motif in their signal peptide across membranes. TatA could form the protein-conducting channel of the Tat system. The sequence is that of Sec-independent protein translocase protein TatAc from Bacillus subtilis (strain 168).